Reading from the N-terminus, the 489-residue chain is Mitochondrial distribution and morphology protein 12 (489 aa).

Positions 1–489 (MSIDLNWEAA…VFPSFWTFLV (489 aa)) constitute an SMP-LTD domain. Positions 72–82 (ESDSEDEDEGH) are enriched in acidic residues. Disordered stretches follow at residues 72–97 (ESDSEDEDEGHEDIQSDASSDRAAAD), 201–313 (WPDA…MRER), and 394–432 (DINHQQRQQQQQQHPYPTTNTSESINNNNPETHPPQPRR). The segment covering 231–249 (LDTGSPSRPSTANTNPTQL) has biased composition (polar residues). 2 stretches are compositionally biased toward low complexity: residues 250 to 265 (SHGQSAAGSSSNNTSN) and 398 to 424 (QQRQQQQQQHPYPTTNTSESINNNNPE).

This sequence belongs to the MDM12 family. Component of the ER-mitochondria encounter structure (ERMES) or MDM complex, composed of MMM1, MDM10, mdm12 and MDM34. An MMM1 homodimer associates with one molecule of mdm12 on each side in a pairwise head-to-tail manner, and the SMP-LTD domains of MMM1 and mdm12 generate a continuous hydrophobic tunnel for phospholipid trafficking.

It is found in the mitochondrion outer membrane. The protein resides in the endoplasmic reticulum membrane. Component of the ERMES/MDM complex, which serves as a molecular tether to connect the endoplasmic reticulum (ER) and mitochondria. Components of this complex are involved in the control of mitochondrial shape and protein biogenesis, and function in nonvesicular lipid trafficking between the ER and mitochondria. mdm12 is required for the interaction of the ER-resident membrane protein MMM1 and the outer mitochondrial membrane-resident beta-barrel protein MDM10. The mdm12-MMM1 subcomplex functions in the major beta-barrel assembly pathway that is responsible for biogenesis of all mitochondrial outer membrane beta-barrel proteins, and acts in a late step after the SAM complex. The MDM10-mdm12-MMM1 subcomplex further acts in the TOM40-specific pathway after the action of the mdm12-MMM1 complex. Essential for establishing and maintaining the structure of mitochondria and maintenance of mtDNA nucleoids. The sequence is that of Mitochondrial distribution and morphology protein 12 from Talaromyces marneffei (strain ATCC 18224 / CBS 334.59 / QM 7333) (Penicillium marneffei).